A 139-amino-acid chain; its full sequence is Histone H2B (139 aa).

Residues 1–37 (MAPKSVASKAPASQASKAPAAASKAPAKAAKTSAAPK) show a composition bias toward low complexity. Residues 1 to 48 (MAPKSVASKAPASQASKAPAAASKAPAKAAKTSAAPKDGAKKRSKKRV) form a disordered region. K9 carries the post-translational modification N6-acetyllysine; alternate. K9 is covalently cross-linked (Glycyl lysine isopeptide (Lys-Gly) (interchain with G-Cter in SUMO); alternate). S13 is modified (phosphoserine). An N6-acetyllysine modification is found at K17. K134 participates in a covalent cross-link: Glycyl lysine isopeptide (Lys-Gly) (interchain with G-Cter in ubiquitin).

The protein belongs to the histone H2B family. As to quaternary structure, the nucleosome is a histone octamer containing two molecules each of H2A, H2B, H3 and H4 assembled in one H3-H4 heterotetramer and two H2A-H2B heterodimers. The octamer wraps approximately 147 bp of DNA. Post-translationally, monoubiquitinated by the UBC2-BRE1 complex to form H2BK123ub1. H2BK123ub1 gives a specific tag for epigenetic transcriptional activation and is also prerequisite for H3K4me and H3K79me formation. H2BK123ub1 also modulates the formation of double-strand breaks during meiosis and is a prerequisite for DNA-damage checkpoint activation. In terms of processing, phosphorylated to form H2BS10ph during progression through meiotic prophase. May be correlated with chromosome condensation. Acetylation of N-terminal lysines and particularly formation of H2BK11ac has a positive effect on transcription. Post-translationally, sumoylation to form H2BK6su occurs preferentially near the telomeres and represses gene transcription.

Its subcellular location is the nucleus. It localises to the chromosome. Its function is as follows. Core component of nucleosome. Nucleosomes wrap and compact DNA into chromatin, limiting DNA accessibility to the cellular machineries which require DNA as a template. Histones thereby play a central role in transcription regulation, DNA repair, DNA replication and chromosomal stability. DNA accessibility is regulated via a complex set of post-translational modifications of histones, also called histone code, and nucleosome remodeling. The sequence is that of Histone H2B (HTB1) from Cryptococcus neoformans var. neoformans serotype D (strain B-3501A) (Filobasidiella neoformans).